The sequence spans 379 residues: Alanine racemase (379 aa).

The active-site Proton acceptor; specific for D-alanine is Lys35. Position 35 is an N6-(pyridoxal phosphate)lysine (Lys35). A substrate-binding site is contributed by Arg133. The active-site Proton acceptor; specific for L-alanine is Tyr265. Met312 lines the substrate pocket.

This sequence belongs to the alanine racemase family. Requires pyridoxal 5'-phosphate as cofactor.

It catalyses the reaction L-alanine = D-alanine. Its pathway is amino-acid biosynthesis; D-alanine biosynthesis; D-alanine from L-alanine: step 1/1. Functionally, catalyzes the interconversion of L-alanine and D-alanine. May also act on other amino acids. The polypeptide is Alanine racemase (alr) (Treponema denticola (strain ATCC 35405 / DSM 14222 / CIP 103919 / JCM 8153 / KCTC 15104)).